We begin with the raw amino-acid sequence, 297 residues long: MKRPDYRTLQALDAVIRERGFERAAQKLCITQSAVSQRIKQLENMFGQPLLVRTVPPRPTEQGQKLLALLRQVELLEEEWLGDEQTGSTPLLLSLAVNADSLATWLLPALAPVLADSPIRLNLQVEDETRTQERLRRGEVVGAVSIQPQALPSCLVDKLGALDYLFVSSKPFAEKYFPNGVTRAALLKAPVVAFDHLDDMHQAFLQQNFDLPPGSVPCHIVNSSEAFVQLARQGTTCCMIPHLQIEKELASGELINLTPGLLQRRMLYWHRFAPESRMMRKVTDALLEYGHKVLRQD.

The HTH lysR-type domain maps to 4-60; it reads PDYRTLQALDAVIRERGFERAAQKLCITQSAVSQRIKQLENMFGQPLLVRTVPPRPT. A DNA-binding region (H-T-H motif) is located at residues 21-40; that stretch reads FERAAQKLCITQSAVSQRIK.

Belongs to the LysR transcriptional regulatory family. As to quaternary structure, homodimer.

Functionally, controls the transcription of genes involved in arginine and lysine metabolism. This is HTH-type transcriptional regulator ArgP from Escherichia fergusonii (strain ATCC 35469 / DSM 13698 / CCUG 18766 / IAM 14443 / JCM 21226 / LMG 7866 / NBRC 102419 / NCTC 12128 / CDC 0568-73).